The sequence spans 233 residues: Orotidine 5'-phosphate decarboxylase (233 aa).

Residues Asp11, Lys34, 61 to 70, Thr117, Arg179, Gln189, Gly209, and Arg210 contribute to the substrate site; that span reads DLKLHDIPNT. Lys63 (proton donor) is an active-site residue.

The protein belongs to the OMP decarboxylase family. Type 1 subfamily. In terms of assembly, homodimer.

It catalyses the reaction orotidine 5'-phosphate + H(+) = UMP + CO2. It participates in pyrimidine metabolism; UMP biosynthesis via de novo pathway; UMP from orotate: step 2/2. In terms of biological role, catalyzes the decarboxylation of orotidine 5'-monophosphate (OMP) to uridine 5'-monophosphate (UMP). In Streptococcus agalactiae serotype III (strain NEM316), this protein is Orotidine 5'-phosphate decarboxylase.